A 134-amino-acid polypeptide reads, in one-letter code: U35-theraphotoxin-Cg1a (134 aa).

The N-terminal stretch at 1–18 is a signal peptide; that stretch reads MLVTLLETFSVVFQVANG. A propeptide spanning residues 19–56 is cleaved from the precursor; that stretch reads DGNCVPRFQDDVEFCDNYILEAVTEASKMIAPRAREQK.

Expressed by the venom gland.

The protein resides in the secreted. Its function is as follows. Probable secreted venom toxin. The chain is U35-theraphotoxin-Cg1a from Chilobrachys guangxiensis (Chinese earth tiger tarantula).